A 4660-amino-acid polypeptide reads, in one-letter code: Low-density lipoprotein receptor-related protein 2 (4660 aa).

An N-terminal signal peptide occupies residues 1–25; that stretch reads MERGAAAAAWMLLLAIAACLAPVSG. The Extracellular segment spans residues 26-4425; the sequence is QECGSGNFRC…LSRGIPPGTT (4400 aa). 7 LDL-receptor class A domains span residues 27–63, 66–104, 107–143, 146–180, 182–218, 221–257, and 264–307; these read ECGS…IGCP, SCGS…QNCP, TCSS…RNCY, TCDQ…ANCT, LCSQ…HNCN, TCGG…DGCE, and TCYP…RYCG. Disulfide bonds link C28–C40, C35–C53, C47–C62, C67–C80, C74–C93, C87–C103, C108–C120, C115–C133, C127–C142, C147–C157, C152–C170, C164–C179, C183–C195, C190–C208, C202–C217, C222–C234, C229–C247, C241–C256, C265–C278, C272–C291, and C285–C306. Residues N159 and N178 are each glycosylated (N-linked (GlcNAc...) asparagine). Residues N299, N340, N387, and N462 are each glycosylated (N-linked (GlcNAc...) asparagine). LDL-receptor class B repeat units lie at residues 435–477, 478–520, 521–567, and 568–612; these read HRVF…DWIN, NKLY…DPTV, GYLF…DLVS, and KRVY…FEEH. N657 carries N-linked (GlcNAc...) asparagine glycosylation. LDL-receptor class B repeat units follow at residues 752-794, 795-836, 837-880, and 881-924; these read STIF…DWIS, RNLY…HPAA, GYMF…DWST, and SRLY…FKDN. N865 carries an N-linked (GlcNAc...) asparagine glycan. Residues 1024 to 1060 enclose the LDL-receptor class A 8 domain; it reads QCGSSSFPCNNGKCVPSIFRCDGVDDCHDNSDEHQCG. 3 cysteine pairs are disulfide-bonded: C1025/C1037, C1032/C1050, and C1044/C1059. The N-linked (GlcNAc...) asparagine glycan is linked to N1063. 7 consecutive LDL-receptor class A domains span residues 1065-1102, 1109-1145, 1149-1185, 1187-1224, 1230-1268, 1271-1307, and 1312-1350; these read TCSS…QNCP, TCPP…KNCQ, TCHP…AGCV, NCTS…AGCP, MCHP…NGCV, TCSP…KDCP, and HCPS…PLCN. 9 cysteine pairs are disulfide-bonded: C1066–C1079, C1073–C1092, C1086–C1101, C1110–C1122, C1117–C1135, C1129–C1144, C1150–C1162, C1157–C1175, and C1169–C1184. Ca(2+) is bound by residues W1127, D1130, D1132, D1134, D1140, and E1141. The N-linked (GlcNAc...) asparagine glycan is linked to N1187. Cystine bridges form between C1188–C1201, C1195–C1214, C1208–C1223, C1231–C1244, C1238–C1257, C1251–C1267, C1272–C1284, C1279–C1297, C1291–C1306, C1313–C1326, C1320–C1339, C1333–C1349, C1354–C1365, C1361–C1374, C1376–C1389, C1395–C1405, C1401–C1414, and C1416–C1429. Ca(2+)-binding residues include Y1206, D1209, V1211, D1213, D1219, and E1220. 2 N-linked (GlcNAc...) asparagine glycosylation sites follow: N1328 and N1341. Residues 1350–1390 form the EGF-like 1 domain; sequence NQDSCLHFNGGCTHRCIQGPFGATCVCPIGYQLANDTKTCE. Residue N1384 is glycosylated (N-linked (GlcNAc...) asparagine). An EGF-like 2; calcium-binding domain is found at 1391–1430; sequence DVNECDIPGFCSQHCVNMRGSFRCACDPEYTLESDGRTCK. N-linked (GlcNAc...) asparagine glycans are attached at residues N1451, N1497, and N1551. LDL-receptor class B repeat units lie at residues 1479–1521, 1522–1564, 1567–1610, 1611–1655, and 1656–1696; these read GRVF…DWIG, RNIY…DPRM, NVMF…DYPN, RLIY…FEDS, and VFWT…IHPS. N-linked (GlcNAc...) asparagine glycosylation is found at N1676, N1733, and N1811. LDL-receptor class B repeat units lie at residues 1791–1833, 1834–1883, 1884–1931, 1932–1973, 1974–2014, 2108–2157, 2158–2202, 2203–2246, 2247–2290, and 2291–2333; these read QFIY…DWVS, RNIY…DPAR, GKLY…DIQE, QKLY…HGSF, LYYS…YHHR, GFIY…DWVA, GNLY…DPKH, RYLF…DHDT, GYIY…FGES, and IIWV…FDEH. N-linked (GlcNAc...) asparagine glycosylation is found at N2131, N2134, N2178, and N2225. N2396 is a glycosylation site (N-linked (GlcNAc...) asparagine). 5 LDL-receptor class B repeats span residues 2432–2478, 2479–2519, 2520–2563, 2564–2605, and 2606–2647; these read NRIF…DWIN, RRIY…DPCR, GYMY…DLET, DLLY…YGQY, and IYWT…VVKT. N-linked (GlcNAc...) asparagine glycans are attached at residues N2488 and N2548. 10 consecutive LDL-receptor class A domains span residues 2700-2738, 2741-2777, 2780-2819, 2822-2861, 2864-2902, 2907-2946, 2949-2991, 2994-3030, 3033-3071, and 3076-3112; these read RCNQ…TVCA, TCRS…AGCL, SCNS…KNCP, TCQP…IYCA, TCRS…DTCG, SCSA…HHCE, NCSS…QNCT, ACST…RGCS, PCRD…HLCH, and TCPP…KGCG. Disulfide bonds link C2701/C2713, C2708/C2726, C2720/C2737, C2742/C2754, C2749/C2767, C2761/C2776, C2781/C2794, C2789/C2807, C2801/C2818, C2823/C2836, C2830/C2849, C2843/C2860, C2865/C2878, C2872/C2891, C2885/C2901, C2908/C2920, C2915/C2933, and C2927/C2945. N-linked (GlcNAc...) asparagine glycosylation is present at N2782. Residue N2810 is glycosylated (N-linked (GlcNAc...) asparagine). Residue N2949 is glycosylated (N-linked (GlcNAc...) asparagine). 18 disulfide bridges follow: C2950-C2967, C2957-C2980, C2974-C2990, C2995-C3007, C3002-C3020, C3014-C3029, C3034-C3046, C3041-C3059, C3053-C3070, C3077-C3089, C3084-C3102, C3096-C3111, C3116-C3128, C3124-C3137, C3139-C3152, C3158-C3169, C3165-C3178, and C3180-C3193. A glycan (N-linked (GlcNAc...) asparagine) is linked at N2989. An EGF-like 3 domain is found at 3112 to 3153; sequence GINECQDSSISHCDHNCTDTITSFYCSCLPGYKLMSDKRTCV. A glycan (N-linked (GlcNAc...) asparagine) is linked at N3127. The region spanning 3154 to 3194 is the EGF-like 4; calcium-binding domain; sequence DIDECKETPQLCSQKCENVIGSYICKCAPGYIREPDGKSCR. Residues N3213, N3259, N3317, and N3357 are each glycosylated (N-linked (GlcNAc...) asparagine). 5 LDL-receptor class B repeats span residues 3241–3283, 3284–3326, 3335–3378, 3379–3421, and 3422–3462; these read ERLY…DWVS, RKLY…ENPR, GYVY…DYTN, DLLY…FEDT, and VFWT…LHPY. N-linked (GlcNAc...) asparagine glycosylation is present at N3448. LDL-receptor class A domains follow at residues 3513-3551, 3554-3592, 3595-3633, 3636-3674, 3679-3717, 3720-3757, 3760-3796, and 3799-3835; these read MCSS…DLCP, FCRL…VLCE, RCEA…SHCA, TCRP…HECM, NCDN…QGCE, PCHP…ESCV, ECTE…RDCE, and TCHP…SACP. 24 disulfide bridges follow: C3514–C3527, C3521–C3540, C3534–C3550, C3555–C3567, C3562–C3580, C3574–C3591, C3596–C3608, C3603–C3621, C3615–C3632, C3637–C3649, C3644–C3662, C3656–C3673, C3680–C3694, C3688–C3707, C3701–C3716, C3721–C3734, C3729–C3747, C3741–C3756, C3761–C3773, C3768–C3786, C3780–C3795, C3800–C3812, C3807–C3825, and C3819–C3834. N3566 is a glycosylation site (N-linked (GlcNAc...) asparagine). The N-linked (GlcNAc...) asparagine glycan is linked to N3682. N3840 is a glycosylation site (N-linked (GlcNAc...) asparagine). 3 consecutive LDL-receptor class A domains span residues 3843-3881, 3884-3923, and 3929-3965; these read YCPA…HLCF, PCES…EHCR, and PCTD…TGCN. Cystine bridges form between C3844-C3856, C3851-C3869, C3863-C3880, C3885-C3898, C3893-C3911, C3905-C3922, C3930-C3942, C3937-C3955, and C3949-C3964. N3969 and N3980 each carry an N-linked (GlcNAc...) asparagine glycan. Positions 4009 to 4050 constitute an EGF-like 5; calcium-binding domain; that stretch reads DINECEEFGICPQSCRNSKGSYECFCVDGFKSMSTHYGERCA. Cystine bridges form between C4013–C4023, C4019–C4032, and C4034–C4049. The N-linked (GlcNAc...) asparagine glycan is linked to N4070. LDL-receptor class B repeat units lie at residues 4156 to 4198, 4199 to 4242, and 4244 to 4285; these read RHIY…NPKL, GLMF…DYLN, and DRIY…FEDQ. N4329 carries an N-linked (GlcNAc...) asparagine glycan. The EGF-like 6 domain maps to 4379 to 4413; the sequence is MPSPCRCMHGGSCYFDENDLPKCKCSSGYSGEYCE. 3 cysteine pairs are disulfide-bonded: C4383-C4391, C4385-C4401, and C4403-C4412. The helical transmembrane segment at 4426-4446 threads the bilayer; the sequence is MALLLTFAMVIIVGALVLVGF. Residues 4447-4660 are Cytoplasmic-facing; that stretch reads FHYRKTGSLL…ANLVKEDSDV (214 aa). Positions 4454–4463 match the SH3-binding motif; sequence SLLPSLPKLP. The PxLPxI/L motif 1; mediates interaction with ANKRA2 signature appears at 4457 to 4462; sequence PSLPKL. The PxLPxI/L motif 2; mediates interaction with ANKRA2 motif lies at 4460 to 4465; that stretch reads PKLPSL. A phosphoserine mark is found at S4464 and S4467. An Endocytosis signal motif is present at residues 4522–4527; sequence FENPMY. The tract at residues 4558–4660 is disordered; the sequence is QNYGRSIDPS…ANLVKEDSDV (103 aa). The residue at position 4577 (S4577) is a Phosphoserine. The segment at 4597-4610 is interaction with DAB2; sequence QTTNFENPIYAEMD. An NPXY motif motif is present at residues 4603–4606; sequence NPIY. Positions 4606-4609 match the SH2-binding motif; the sequence is YAEM. The short motif at 4619–4630 is the SH3-binding element; the sequence is VAPPPSPSLPAK. S4624 carries the phosphoserine modification. Residues 4627-4636 are compositionally biased toward low complexity; that stretch reads LPAKASKRSS. Position 4637 is a phosphothreonine (T4637). Position 4658 is a phosphoserine (S4658).

It belongs to the LDLR family. In terms of assembly, binds plasminogen, extracellular matrix components, plasminogen activator-plasminogen activator inhibitor type I complex, apolipoprotein E-enriched beta-VLDL, lipoprotein lipase, lactoferrin, CLU/clusterin and calcium. Forms a multimeric complex together with LRPAP1. Interacts (via PxLPxI/L motif) with ANKRA2 (via ankyrin repeats). Interacts with LRP2BP. Interacts (via NPXY motif) with DAB2; the interaction is not affected by tyrosine phosphorylation of the NPXY motif. Interacts with MB. Interacts with BMP4. Interacts with the Sonic hedgehog protein N-product which is the active product of SHH. Interacts with CST3 in a calcium-dependent manner. Interacts with the vitamin-D binding protein GC/DBP. Interacts with sex hormone-binding protein SHBG. Interacts with angiotensin-2. Also interacts with angiotensin 1-7. Interacts with APOM. Interacts with selenoprotein SEPP1. Interacts with LEP. Interacts with ALB. Interacts with the antiapoptotic protein BIRC5/survivin. Interacts with matrix metalloproteinase MMP2 in complex with metalloproteinase inhibitor TIMP1. In neurons, forms a trimeric complex with APP and APPB1/FE65. Interacts with LDLRAP1/ARH; mediates trafficking of LRP2 to the endocytic recycling compartment. Does not interact with beta-amyloid protein 40 alone but interacts with the complex composed of beta-amyloid protein 40 and CLU/APOJ. Interacts with MDK. A fraction undergoes proteolytic cleavage of the extracellular domain at the cell membrane to generate a cytoplasmic tail fragment. This is internalized into the early endosome from where it trafficks in an LDLRAP1/ARH-dependent manner to the endocytic recycling compartment (ERC). In the ERC, it is further cleaved by gamma-secretase to release a fragment which translocates to the nucleus and mediates transcriptional repression. Post-translationally, N-glycosylation is required for ligand binding. Contains core-fucosylated N-glycans in kidney proximal convoluted tubules (PCTs) and hybrid-type N-glycans in proximal straight tubules (PSTs). Interacts with ligands in a glycoform-dependent manner. Retinol-binding protein and the vitamin D carrier GC/DBP are endocytosed primarily by PCTs, albumin is endocytosed equally by PCTs and PSTs, and the aminoglycoside kanamycin is endocytosed primarily by PSTs. In terms of tissue distribution, in the inner ear, strongly expressed in the marginal cells of the stria vascularis (at protein level). In the female reproductive tract, expressed on the luminal side of the uterine epithelium (at protein level). In the adult brain, expressed in ependymal cells of the lateral ventricles where expression is restricted to the ependyma that faces the stem cell niche (at protein level). Expressed in neurons throughout the brain including in the hippocampus, limbic cortices and cerebellum (at protein level). In the developing optic nerve, expressed exclusively in astrocytes at 14.5 dpc, 16.5 dpc and 18.5 dpc (at protein level).

The protein localises to the apical cell membrane. Its subcellular location is the endosome lumen. The protein resides in the membrane. It localises to the coated pit. It is found in the cell projection. The protein localises to the dendrite. Its subcellular location is the axon. Functionally, multiligand endocytic receptor. Acts together with CUBN to mediate endocytosis of high-density lipoproteins. Mediates receptor-mediated uptake of polybasic drugs such as aprotinin, aminoglycosides and polymyxin B. In the kidney, mediates the tubular uptake and clearance of leptin. Also mediates transport of leptin across the blood-brain barrier through endocytosis at the choroid plexus epithelium. Endocytosis of leptin in neuronal cells is required for hypothalamic leptin signaling and leptin-mediated regulation of feeding and body weight. Mediates endocytosis and subsequent lysosomal degradation of CST3 in kidney proximal tubule cells. Mediates renal uptake of 25-hydroxyvitamin D3 in complex with the vitamin D3 transporter GC/DBP. Mediates renal uptake of metallothionein-bound heavy metals. Together with CUBN, mediates renal reabsorption of myoglobin. Mediates renal uptake and subsequent lysosomal degradation of APOM. Plays a role in kidney selenium homeostasis by mediating renal endocytosis of selenoprotein SEPP1. Mediates renal uptake of the antiapoptotic protein BIRC5/survivin which may be important for functional integrity of the kidney. Mediates renal uptake of matrix metalloproteinase MMP2 in complex with metalloproteinase inhibitor TIMP1. Mediates endocytosis of Sonic hedgehog protein N-product (ShhN), the active product of SHH. Also mediates ShhN transcytosis. In the embryonic neuroepithelium, mediates endocytic uptake and degradation of BMP4, is required for correct SHH localization in the ventral neural tube and plays a role in patterning of the ventral telencephalon. Required at the onset of neurulation to sequester SHH on the apical surface of neuroepithelial cells of the rostral diencephalon ventral midline and to control PTCH1-dependent uptake and intracellular trafficking of SHH. During neurulation, required in neuroepithelial cells for uptake of folate bound to the folate receptor FOLR1 which is necessary for neural tube closure. In the adult brain, negatively regulates BMP signaling in the subependymal zone which enables neurogenesis to proceed. In astrocytes, mediates endocytosis of ALB which is required for the synthesis of the neurotrophic factor oleic acid. Involved in neurite branching. During optic nerve development, required for SHH-mediated migration and proliferation of oligodendrocyte precursor cells. Mediates endocytic uptake and clearance of SHH in the retinal margin which protects retinal progenitor cells from mitogenic stimuli and keeps them quiescent. Plays a role in reproductive organ development by mediating uptake in reproductive tissues of androgen and estrogen bound to the sex hormone binding protein SHBG. Mediates endocytosis of angiotensin-2. Also mediates endocytosis of angiotensin 1-7. Binds to the complex composed of beta-amyloid protein 40 and CLU/APOJ and mediates its endocytosis and lysosomal degradation. Required for embryonic heart development. Required for normal hearing, possibly through interaction with estrogen in the inner ear. This is Low-density lipoprotein receptor-related protein 2 (Lrp2) from Mus musculus (Mouse).